The chain runs to 773 residues: Transducin-like enhancer protein 4 (773 aa).

3 disordered regions span residues 1 to 22, 140 to 162, and 182 to 357; these read MIRD…QPAQ, HGHG…AIPP, and LPIK…DPLA. The tract at residues 1–136 is q domain; the sequence is MIRDLSKMYP…AIIGQQLQAQ (136 aa). A GP domain region spans residues 137 to 204; sequence HLSHGHGLPV…HQRDRDSIKS (68 aa). The span at 183–202 shows a compositional bias: basic and acidic residues; the sequence is PIKDEKKHHDNDHQRDRDSI. A compositionally biased stretch (low complexity) spans 203 to 214; it reads KSSSVSPSASFR. A ccN domain region spans residues 205-274; that stretch reads SSVSPSASFR…SPRGSPAHSP (70 aa). Phosphoserine occurs at positions 208, 212, 216, and 222. Residues 215-252 are compositionally biased toward basic and acidic residues; that stretch reads GSEKHRNSTDYSSESKKQKTEEKEIAARYDSDGEKSDD. The residue at position 237 (Lys-237) is an N6-acetyllysine. Position 245 is a phosphoserine (Ser-245). Phosphoserine; by CK2 is present on Ser-250. Position 265 is a phosphoserine; by CDK1 (Ser-265). A phosphoserine mark is found at Ser-269 and Ser-273. Residues 273 to 289 are compositionally biased toward basic and acidic residues; sequence SPRENGLDKTRLLKKDA. The segment at 275–452 is SP domain; it reads RENGLDKTRL…PGGKPAYSFH (178 aa). At Lys-281 the chain carries N6-acetyllysine. Residues 290–305 show a composition bias toward low complexity; the sequence is PISPASVASSSSTPSS. Ser-292 bears the Phosphoserine mark. Polar residues predominate over residues 317–328; the sequence is TTPVSKSNTPTP. A Phosphothreonine modification is found at Thr-318. Phosphoserine occurs at positions 321 and 323. Phosphothreonine is present on residues Thr-325, Thr-327, Thr-334, and Thr-340. A Phosphoserine modification is found at Ser-419. WD repeat units follow at residues 485–523, 531–570, 575–614, 617–656, 658–697, 699–738, and 740–773; these read NHGE…NKSP, NRDN…PRIK, SSAP…LVRQ, GHTD…QLQQ, DFTS…KYQL, LHES…SIFQ, and KESS…EVIY.

This sequence belongs to the WD repeat Groucho/TLE family. As to quaternary structure, homooligomer and heterooligomer with other family members. Interacts with PAX5. Interacts with LEF1, TCF7, TCF7L1 and TCF7L2. Interacts with ZNF703; TLE4 may mediate ZNF703 transcriptional repression. Interacts with SIX3 and SIX6. Interacts with PAX2. Interacts with TLE1. Post-translationally, phosphorylated. PAX5 binding increases phosphorylation. Ubiquitinated by XIAP/BIRC4. Expressed in bone marrow-derived macrophages.

It is found in the nucleus. Its function is as follows. Transcriptional corepressor that binds to a number of transcription factors. Inhibits the transcriptional activation mediated by PAX5, and by CTNNB1 and TCF family members in Wnt signaling. The effects of full-length TLE family members may be modulated by association with dominant-negative AES. Essential for the transcriptional repressor activity of SIX3 during retina and lens development and for SIX3 transcriptional auto-repression. Involved in transcriptional repression of GNRHR and enhances MSX1-mediated transcriptional repression of CGA/alpha-GSU. The sequence is that of Transducin-like enhancer protein 4 (Tle4) from Mus musculus (Mouse).